Consider the following 412-residue polypeptide: MKAARFVMRSASSLSSASLVPREVELFSRYSPSPLSMKQLLDFGSENACERTSFAFLRQELPVRLANILKEIDILPDRLVNTPSVQLVKSWYIQSLMDLVEFHEKSPEDQKALSEFVDTLVKVRNRHHNVVPTMAQGILEYKDTCTVDPVTNQNLQYFLDRFYMNRISTRMLMNQHILIFSDSKTGNPSHIGSIDPNCDVVAVVQDAFECAKMLCDQYYLTSPELNLTQVNGKFPGQPIHIVYVPSHLHHMLFELFKNAMRATVEHQENRPSLTPVEATVVLGKEDLTIKISDRGGGVPLRITDRLFSYTYSTAPTPVMDNSRNAPLAGFGYGLPISRLYAKYFQGDLNLYSMSGYGTDAIIYLKALSSESVEKLPVFNKSAFKHYQMSSEADDWCIPSREPKNLAKEKLAV.

One can recognise a Histidine kinase domain in the interval 138 to 368; the sequence is ILEYKDTCTV…DAIIYLKALS (231 aa). Residues 254–261, Asp-293, 312–313, and 329–334 contribute to the ATP site; these read ELFKNAMR, ST, and GFGYGL.

It belongs to the PDK/BCKDK protein kinase family. In terms of assembly, homodimer. Interacts with the pyruvate dehydrogenase complex subunit DLAT, and is part of the multimeric pyruvate dehydrogenase complex that contains multiple copies of pyruvate dehydrogenase (E1), dihydrolipoamide acetyltransferase (DLAT, E2) and lipoamide dehydrogenase (DLD, E3).

The protein resides in the mitochondrion matrix. The enzyme catalyses L-seryl-[pyruvate dehydrogenase E1 alpha subunit] + ATP = O-phospho-L-seryl-[pyruvate dehydrogenase E1 alpha subunit] + ADP + H(+). In terms of biological role, kinase that plays a key role in regulation of glucose and fatty acid metabolism and homeostasis via phosphorylation of the pyruvate dehydrogenase subunits PDHA1 and PDHA2. This inhibits pyruvate dehydrogenase activity, and thereby regulates metabolite flux through the tricarboxylic acid cycle, down-regulates aerobic respiration and inhibits the formation of acetyl-coenzyme A from pyruvate. Inhibition of pyruvate dehydrogenase decreases glucose utilization and increases fat metabolism in response to prolonged fasting and starvation. Plays an important role in maintaining normal blood glucose levels under starvation, and is involved in the insulin signaling cascade. Via its regulation of pyruvate dehydrogenase activity, plays an important role in maintaining normal blood pH and in preventing the accumulation of ketone bodies under starvation. In the fed state, mediates cellular responses to glucose levels and to a high-fat diet. Regulates both fatty acid oxidation and de novo fatty acid biosynthesis. Plays a role in the generation of reactive oxygen species. Protects detached epithelial cells against anoikis. Plays a role in cell proliferation via its role in regulating carbohydrate and fatty acid metabolism. In Mus musculus (Mouse), this protein is [Pyruvate dehydrogenase (acetyl-transferring)] kinase isozyme 4, mitochondrial (Pdk4).